Here is a 383-residue protein sequence, read N- to C-terminus: uncharacterized protein (383 aa).

The interval 1–55 (MSSKLTVNAHYSPLKDEDPLDHIDSQTALDSMETDSTGKSSLYFSKSDDPLSKDI) is disordered. The segment covering 13–24 (PLKDEDPLDHID) has biased composition (basic and acidic residues). The span at 25 to 44 (SQTALDSMETDSTGKSSLYF) shows a compositional bias: polar residues. Positions 46–55 (KSDDPLSKDI) are enriched in basic and acidic residues. A run of 10 helical transmembrane segments spans residues 87 to 107 (LTIF…TILN), 112 to 132 (NIIN…SLMV), 157 to 177 (FIFV…FVPV), 179 to 199 (FYQI…FVLL), 205 to 225 (LFPF…VRFE), 228 to 248 (VAPI…IESV), 262 to 282 (LIYI…VASL), 299 to 319 (FFIV…ATFT), 329 to 349 (YMIS…AFLG), and 352 to 372 (LYGN…LYTL).

Belongs to the TPT transporter family.

It localises to the membrane. This is an uncharacterized protein from Schizosaccharomyces pombe (strain 972 / ATCC 24843) (Fission yeast).